The chain runs to 232 residues: Ribonuclease 3 (232 aa).

Residues 9–131 (INLLQKKLGY…IIGGIFLDSN (123 aa)) form the RNase III domain. A Mg(2+)-binding site is contributed by E44. D48 is a catalytic residue. 2 residues coordinate Mg(2+): D117 and E120. E120 is a catalytic residue. The DRBM domain occupies 158-228 (DPKTRLQEYL…AENALKFLIE (71 aa)).

It belongs to the ribonuclease III family. Homodimer. The cofactor is Mg(2+).

It localises to the cytoplasm. The enzyme catalyses Endonucleolytic cleavage to 5'-phosphomonoester.. Its function is as follows. Digests double-stranded RNA. Involved in the processing of primary rRNA transcript to yield the immediate precursors to the large and small rRNAs (23S and 16S). Processes some mRNAs, and tRNAs when they are encoded in the rRNA operon. Processes pre-crRNA and tracrRNA of type II CRISPR loci if present in the organism. This Blochmanniella floridana protein is Ribonuclease 3.